The following is a 180-amino-acid chain: Large ribosomal subunit protein uL5 (180 aa).

This sequence belongs to the universal ribosomal protein uL5 family. Part of the 50S ribosomal subunit; part of the 5S rRNA/L5/L18/L25 subcomplex. Contacts the 5S rRNA and the P site tRNA. Forms a bridge to the 30S subunit in the 70S ribosome.

This is one of the proteins that bind and probably mediate the attachment of the 5S RNA into the large ribosomal subunit, where it forms part of the central protuberance. In the 70S ribosome it contacts protein S13 of the 30S subunit (bridge B1b), connecting the 2 subunits; this bridge is implicated in subunit movement. Contacts the P site tRNA; the 5S rRNA and some of its associated proteins might help stabilize positioning of ribosome-bound tRNAs. This is Large ribosomal subunit protein uL5 from Synechococcus sp. (strain JA-2-3B'a(2-13)) (Cyanobacteria bacterium Yellowstone B-Prime).